The chain runs to 210 residues: Somatotropin (210 aa).

The first 22 residues, 1–22 (MGQVFLLMPVLLVSCFLSHGAA), serve as a signal peptide directing secretion. A Zn(2+)-binding site is contributed by H38. Residues C71 and C183 are joined by a disulfide bond. E192 lines the Zn(2+) pocket. The cysteines at positions 200 and 208 are disulfide-linked.

It belongs to the somatotropin/prolactin family.

The protein localises to the secreted. Functionally, growth hormone plays an important role in growth control and is involved in the regulation of several anabolic processes. Implicated as an osmoregulatory substance important for seawater adaptation. The protein is Somatotropin (gh) of Oncorhynchus masou (Cherry salmon).